The sequence spans 687 residues: Hemin receptor (687 aa).

An N-terminal signal peptide occupies residues 1–28 (MPRSTSDRFRWSPLSLAIACTLSLAVQA). A TonB box motif is present at residues 44–51 (DTMVVTAT). A TBDR plug domain is found at 56–167 (SSFEAPMMVT…LGGVISYETV (112 aa)). Positions 178–687 (NSGYRVYSAA…NAKFFVSYQW (510 aa)) constitute a TBDR beta-barrel domain. Residues 319-338 (ARPQGTPEEGRKQTTKGGKL) are disordered. Over residues 326–338 (EEGRKQTTKGGKL) the composition is skewed to basic and acidic residues. The TonB C-terminal box motif lies at 670–687 (QGVPQDGRNAKFFVSYQW).

The protein belongs to the TonB-dependent receptor family.

It localises to the cell outer membrane. In terms of biological role, this protein is involved in the initial step of iron uptake by binding hemin, an iron chelatin siderophore that allows the bacteria to extract iron from the environment. In Yersinia enterocolitica, this protein is Hemin receptor (hemR).